The primary structure comprises 123 residues: Small ribosomal subunit protein uS12 (123 aa).

Positions 1 to 29 (MPTINQLIRKKRQSSASRKKSPALQKCPQ) are disordered. The span at 8–21 (IRKKRQSSASRKKS) shows a compositional bias: basic residues. Asp-89 is modified (3-methylthioaspartic acid).

The protein belongs to the universal ribosomal protein uS12 family. As to quaternary structure, part of the 30S ribosomal subunit. Contacts proteins S8 and S17. May interact with IF1 in the 30S initiation complex.

With S4 and S5 plays an important role in translational accuracy. Functionally, interacts with and stabilizes bases of the 16S rRNA that are involved in tRNA selection in the A site and with the mRNA backbone. Located at the interface of the 30S and 50S subunits, it traverses the body of the 30S subunit contacting proteins on the other side and probably holding the rRNA structure together. The combined cluster of proteins S8, S12 and S17 appears to hold together the shoulder and platform of the 30S subunit. This Chlamydia abortus (strain DSM 27085 / S26/3) (Chlamydophila abortus) protein is Small ribosomal subunit protein uS12.